The primary structure comprises 78 residues: DNA-directed RNA polymerase subunit omega (78 aa).

Belongs to the RNA polymerase subunit omega family. In cyanobacteria the RNAP catalytic core is composed of 2 alpha, 1 beta, 1 beta', 1 gamma and 1 omega subunit. When a sigma factor is associated with the core the holoenzyme is formed, which can initiate transcription.

The catalysed reaction is RNA(n) + a ribonucleoside 5'-triphosphate = RNA(n+1) + diphosphate. Functionally, promotes RNA polymerase assembly. Latches the N- and C-terminal regions of the beta' subunit thereby facilitating its interaction with the beta and alpha subunits. The polypeptide is DNA-directed RNA polymerase subunit omega (Trichormus variabilis (strain ATCC 29413 / PCC 7937) (Anabaena variabilis)).